The primary structure comprises 351 residues: MGRAARWFKGMFGTKKSKDRSHVSGGDSVKGGDHSGDFNVPRDSVLLGTILTDTEKDQNKNAIAVATATATAADAAVSAAVVRLTSEGRAGDIIITKEERWAAVKIQKVFRGSLARKALRALKGIVKLQALVRGYLVRKRAAAMLQSIQTLIRVQTAMRSKRINRSLNKEYNNMFQPRQSFDKFDEATFDDRRTKIVEKDDRYMRRSSSRSRSRQVHNVVSMSDYEGDFVYKGNDLELCFSDEKWKFATAQNTPRLLHHHSANNRYYVMQSPAKSVGGKALCDYESSVSTPGYMEKTKSFKAKVRSHSAPRQRSERQRLSLDEVMASKSSVSGVSMSHQHPPRHSCSCDPL.

Residues 15–37 (KKSKDRSHVSGGDSVKGGDHSGD) are disordered. The interval 98 to 114 (EERWAAVKIQKVFRGSL) is calmodulin-binding. 2 consecutive IQ domains span residues 99 to 127 (ERWA…GIVK) and 128 to 150 (LQAL…SIQT). A Nuclear localization signal motif is present at residues 191–198 (DRRTKIVE). Over residues 299–310 (SFKAKVRSHSAP) the composition is skewed to basic residues. The interval 299–351 (SFKAKVRSHSAPRQRSERQRLSLDEVMASKSSVSGVSMSHQHPPRHSCSCDPL) is disordered. Residues 312–321 (QRSERQRLSL) show a composition bias toward basic and acidic residues. Positions 324–337 (VMASKSSVSGVSMS) are enriched in low complexity.

It belongs to the IQD family. Binds to multiple calmodulin (CaM) in the presence of Ca(2+) and CaM-like proteins.

The protein localises to the nucleus. It is found in the nucleus envelope. The protein resides in the cytoplasm. Its subcellular location is the cytoskeleton. Its function is as follows. May be involved in cooperative interactions with calmodulins or calmodulin-like proteins. Recruits calmodulin proteins to microtubules, thus being a potential scaffold in cellular signaling and trafficking. May associate with nucleic acids and regulate gene expression at the transcriptional or post-transcriptional level. This is Protein IQ-DOMAIN 27 from Arabidopsis thaliana (Mouse-ear cress).